Reading from the N-terminus, the 356-residue chain is MSMGLTFLGIESSCDDTAAAVVRDDRSILASVVAGQAALHADFGGVVPEIAARAHAEKLDLCVEEALAQAGLRLSDLDGIAVTAGPGLIGGVLSGVMLAKGLAAGTGLPLVGVNHLAGHALTPRLTDGTPYPYLMLLVSGGHCQFLRVDGPEDFTRLGGTIDDAPGEAFDKVAKLLGLPQPGGPSVEAAARAGDARRFALPRPLLDRPGCDLSFSGLKTAVLRQRDELVAAQGGLHEQDRADLCAGFQAAVAEVLAEKTRRALALAPAPVLAAAGGVAANQTLRTALQAVAAEAGATFLAPPLRLCTDNAAMIAWAGIEAYEAGRRDGMDLAARPRWPLDQRAAPMLGAGKRGAKA.

Fe cation contacts are provided by H115 and H119. Substrate contacts are provided by residues L137–G141, D170, G183, and N280. A Fe cation-binding site is contributed by D308.

Belongs to the KAE1 / TsaD family. Fe(2+) serves as cofactor.

It is found in the cytoplasm. The catalysed reaction is L-threonylcarbamoyladenylate + adenosine(37) in tRNA = N(6)-L-threonylcarbamoyladenosine(37) in tRNA + AMP + H(+). Its function is as follows. Required for the formation of a threonylcarbamoyl group on adenosine at position 37 (t(6)A37) in tRNAs that read codons beginning with adenine. Is involved in the transfer of the threonylcarbamoyl moiety of threonylcarbamoyl-AMP (TC-AMP) to the N6 group of A37, together with TsaE and TsaB. TsaD likely plays a direct catalytic role in this reaction. The polypeptide is tRNA N6-adenosine threonylcarbamoyltransferase (Paracoccus denitrificans (strain Pd 1222)).